A 161-amino-acid polypeptide reads, in one-letter code: Phosphopantetheine adenylyltransferase (161 aa).

Substrate is bound at residue Ser-10. Residues 10-11 and His-18 contribute to the ATP site; that span reads SF. 3 residues coordinate substrate: Lys-42, Ala-75, and Arg-89. Residues 90–92, Glu-100, and 125–131 each bind ATP; these read GLR and LSPISSS.

It belongs to the bacterial CoaD family. In terms of assembly, homohexamer. Mg(2+) is required as a cofactor.

Its subcellular location is the cytoplasm. The catalysed reaction is (R)-4'-phosphopantetheine + ATP + H(+) = 3'-dephospho-CoA + diphosphate. Its pathway is cofactor biosynthesis; coenzyme A biosynthesis; CoA from (R)-pantothenate: step 4/5. In terms of biological role, reversibly transfers an adenylyl group from ATP to 4'-phosphopantetheine, yielding dephospho-CoA (dPCoA) and pyrophosphate. The protein is Phosphopantetheine adenylyltransferase of Streptococcus agalactiae serotype III (strain NEM316).